The primary structure comprises 622 residues: uncharacterized protein (622 aa).

Residues L157–Q166 show a composition bias toward basic and acidic residues. The interval L157 to E238 is disordered.

This is an uncharacterized protein from Homo sapiens (Human).